We begin with the raw amino-acid sequence, 194 residues long: Chorion class B protein ERB4 (194 aa).

The first 20 residues, 1 to 20, serve as a signal peptide directing secretion; sequence MSSNVIVLCVSALFIQCAVS. Residues 22–72 are left arm; sequence CVGRIGSLRGGPFDGWGYDGLGYDGFGIGGWNGRGCGGLGDDIAAAAALGA. The interval 73-128 is central domain; the sequence is SHGGTLAVVSTSAAPTGLGIASENVYEGSVGVCGNLPFLGTADVAGEFPTAGLGGI. The interval 129 to 194 is right arm (Gly-rich tandem repeats); that stretch reads DYTCGDGAVG…RGCGCGANYY (66 aa).

Belongs to the chorion protein family.

Its function is as follows. This protein is one of many from the eggshell of the silk moth. The sequence is that of Chorion class B protein ERB4 from Bombyx mori (Silk moth).